Reading from the N-terminus, the 307-residue chain is Transmembrane protein 200B (307 aa).

The segment at 1 to 38 (MTAGSPEECGEVRRSPEGRVSRLGRRLGRRRRPRSPPE) is disordered. The span at 10–20 (GEVRRSPEGRV) shows a compositional bias: basic and acidic residues. The span at 22–34 (RLGRRLGRRRRPR) shows a compositional bias: basic residues. A helical transmembrane segment spans residues 53 to 73 (GAFAALGALVVLVGMGIAVAG). Residues 81-111 (APGSRAANASSPQMSELRREGRGGGRAHGPH) form a disordered region. The N-linked (GlcNAc...) asparagine glycan is linked to asparagine 88. The segment covering 96–111 (ELRREGRGGGRAHGPH) has biased composition (basic and acidic residues). A helical membrane pass occupies residues 116 to 136 (LLGPVIMGVGLFVFICANTLL). The segment at 180 to 211 (AVGCAEPEIWDPSPRRGTSPVPSVRSLRSEPA) is disordered.

Belongs to the TMEM200 family.

The protein localises to the membrane. The chain is Transmembrane protein 200B (TMEM200B) from Homo sapiens (Human).